A 217-amino-acid chain; its full sequence is Homologous-pairing protein 2 homolog (217 aa).

The interaction with NR3C1, homodimerization and transcriptional activation almost abolished when missing stretch occupies residues 89–117 (LDASIMALTAKVQGLQQSCRHMEAELKEL). A coiled-coil region spans residues 93-153 (IMALTAKVQG…LKNIKAATNH (61 aa)). Residues 118–182 (TSALTTPEMQ…WRKRKRMTTE (65 aa)) form a DNA-binding region. The interval 118–182 (TSALTTPEMQ…WRKRKRMTTE (65 aa)) is interaction with NR3C1 decreased when missing.

It belongs to the HOP2 family. Forms a stable heterodimer with MND1. Interacts with PSMC3/TBP1. Interacts with the DNA-binding domain of the nuclear receptors NR3C1/GR, ESR2/ER-beta, THRB and RXRA. Phosphorylated by PKA, PKC and MAPK.

It is found in the nucleus. Plays an important role in meiotic recombination. Stimulates DMC1-mediated strand exchange required for pairing homologous chromosomes during meiosis. The complex PSMC3IP/MND1 binds DNA, stimulates the recombinase activity of DMC1 as well as DMC1 D-loop formation from double-strand DNA. This complex stabilizes presynaptic RAD51 and DMC1 filaments formed on single strand DNA to capture double-strand DNA. This complex stimulates both synaptic and presynaptic critical steps in RAD51 and DMC1-promoted homologous pairing. May inhibit HIV-1 viral protein TAT activity and modulate the activity of proteasomes through association with PSMC3. Plays a role as a coactivator in nuclear receptor-mediated transcription. This is Homologous-pairing protein 2 homolog (Psmc3ip) from Rattus norvegicus (Rat).